Here is a 375-residue protein sequence, read N- to C-terminus: 23S rRNA (uracil(747)-C(5))-methyltransferase RlmC (375 aa).

[4Fe-4S] cluster contacts are provided by cysteine 3, cysteine 11, cysteine 14, and cysteine 87. S-adenosyl-L-methionine is bound by residues glutamine 212, phenylalanine 241, glutamate 262, and asparagine 307. Cysteine 334 (nucleophile) is an active-site residue.

It belongs to the class I-like SAM-binding methyltransferase superfamily. RNA M5U methyltransferase family. RlmC subfamily.

It carries out the reaction uridine(747) in 23S rRNA + S-adenosyl-L-methionine = 5-methyluridine(747) in 23S rRNA + S-adenosyl-L-homocysteine + H(+). Catalyzes the formation of 5-methyl-uridine at position 747 (m5U747) in 23S rRNA. The polypeptide is 23S rRNA (uracil(747)-C(5))-methyltransferase RlmC (Serratia proteamaculans (strain 568)).